A 282-amino-acid polypeptide reads, in one-letter code: Bifunctional protein FolD 2 (282 aa).

NADP(+) contacts are provided by residues Gly-165 to Ser-167 and Ser-190.

It belongs to the tetrahydrofolate dehydrogenase/cyclohydrolase family. In terms of assembly, homodimer.

It catalyses the reaction (6R)-5,10-methylene-5,6,7,8-tetrahydrofolate + NADP(+) = (6R)-5,10-methenyltetrahydrofolate + NADPH. The catalysed reaction is (6R)-5,10-methenyltetrahydrofolate + H2O = (6R)-10-formyltetrahydrofolate + H(+). It participates in one-carbon metabolism; tetrahydrofolate interconversion. Its function is as follows. Catalyzes the oxidation of 5,10-methylenetetrahydrofolate to 5,10-methenyltetrahydrofolate and then the hydrolysis of 5,10-methenyltetrahydrofolate to 10-formyltetrahydrofolate. The polypeptide is Bifunctional protein FolD 2 (Acinetobacter baylyi (strain ATCC 33305 / BD413 / ADP1)).